Here is a 361-residue protein sequence, read N- to C-terminus: Probable dual-specificity RNA methyltransferase RlmN (361 aa).

Catalysis depends on Glu-91, which acts as the Proton acceptor. Residues 97-329 form the Radical SAM core domain; the sequence is QHYGLSVCVT…KKKGVNCVVR (233 aa). A disulfide bond links Cys-104 and Cys-340. 3 residues coordinate [4Fe-4S] cluster: Cys-111, Cys-115, and Cys-118. Residues 163-164, Ser-195, 218-220, and Asn-296 each bind S-adenosyl-L-methionine; these read GE and SLH. The S-methylcysteine intermediate role is filled by Cys-340.

It belongs to the radical SAM superfamily. RlmN family. It depends on [4Fe-4S] cluster as a cofactor.

It is found in the cytoplasm. It catalyses the reaction adenosine(2503) in 23S rRNA + 2 reduced [2Fe-2S]-[ferredoxin] + 2 S-adenosyl-L-methionine = 2-methyladenosine(2503) in 23S rRNA + 5'-deoxyadenosine + L-methionine + 2 oxidized [2Fe-2S]-[ferredoxin] + S-adenosyl-L-homocysteine. The catalysed reaction is adenosine(37) in tRNA + 2 reduced [2Fe-2S]-[ferredoxin] + 2 S-adenosyl-L-methionine = 2-methyladenosine(37) in tRNA + 5'-deoxyadenosine + L-methionine + 2 oxidized [2Fe-2S]-[ferredoxin] + S-adenosyl-L-homocysteine. Functionally, specifically methylates position 2 of adenine 2503 in 23S rRNA and position 2 of adenine 37 in tRNAs. The protein is Probable dual-specificity RNA methyltransferase RlmN of Streptococcus pneumoniae serotype 19F (strain G54).